The following is a 182-amino-acid chain: Nuclear cap-binding protein subunit 2 (182 aa).

MRNA contacts are provided by residues Tyr13, Tyr35, 104-108 (RADLD), 115-119 (RQYGR), and 125-126 (QV). An RRM domain is found at 32–110 (NCVYVGNLSF…RIIRADLDHG (79 aa)). The segment at 114–182 (GRQYGRGASG…NPRYNRWKKN (69 aa)) is disordered. Positions 126 to 136 (VRDEMREEFDP) are enriched in basic and acidic residues. Polar residues predominate over residues 145 to 175 (RQPTSSRQLANYSGISSAPLGSSLELQSNPR).

The protein belongs to the RRM NCBP2 family. In terms of assembly, component of the nuclear cap-binding complex (CBC), a heterodimer composed of cbc1 and cbc2 that interacts with capped RNAs.

It is found in the cytoplasm. It localises to the perinuclear region. Its subcellular location is the nucleus. Its function is as follows. Component of the CBC complex, which binds co-transcriptionally to the 5' cap of pre-mRNAs and is involved in maturation, export and degradation of nuclear mRNAs. The chain is Nuclear cap-binding protein subunit 2 (cbc2) from Schizosaccharomyces pombe (strain 972 / ATCC 24843) (Fission yeast).